The sequence spans 132 residues: MTWEYALIGLVVGIIIGAVAMRFGNRKLRQQQALQYELEKNKAELDEYREELVSHFARSAELLDTMAHDYRQLYQHMAKSSSSLLPELSAEANPFRNRLAESEASNDQAPVQMPRDYSEGASGLLRTGAKRD.

The helical transmembrane segment at 1–21 (MTWEYALIGLVVGIIIGAVAM) threads the bilayer. Residues 95–132 (FRNRLAESEASNDQAPVQMPRDYSEGASGLLRTGAKRD) form a disordered region.

The protein belongs to the ZapG family.

It localises to the cell inner membrane. In terms of biological role, involved in cell division, cell envelope biogenesis and cell shape maintenance. This chain is Z-ring associated protein G, found in Escherichia coli O157:H7.